We begin with the raw amino-acid sequence, 833 residues long: A disintegrin and metalloproteinase with thrombospondin motifs 4 (833 aa).

Residues 1-49 (MSQMGLHPRRGLTGHWLQRFQPCLPLHTVQWRRLLLLAFLLSLAWPASP) form the signal peptide. Positions 50-208 (LPREEEIVFP…PSPISRRTKR (159 aa)) are excised as a propeptide. A glycan (N-linked (GlcNAc...) asparagine) is linked at Asn63. Residues 180–204 (KSPASSQGPMCTVKAPSGSPSPISR) form a disordered region. A Cysteine switch motif is present at residues 188 to 195 (PMCTVKAP). Cys190 lines the Zn(2+) pocket. The Peptidase M12B domain maps to 214 to 424 (RFVETLVVAD…GYGHCLLDKP (211 aa)). Intrachain disulfides connect Cys289–Cys341, Cys318–Cys323, Cys335–Cys419, Cys373–Cys403, Cys445–Cys468, Cys456–Cys478, Cys463–Cys497, Cys491–Cys502, Cys528–Cys565, Cys532–Cys570, and Cys543–Cys555. Asn299 carries an N-linked (GlcNAc...) asparagine glycan. His357 contributes to the Zn(2+) binding site. Residue Glu358 is part of the active site. The Zn(2+) site is built by His361 and His367. Residues 433–515 (TFPGKDYDAD…DQLKDFNVPQ (83 aa)) enclose the Disintegrin domain. Residues 516–571 (AGGWGPWGPWGDCSRTCGGGVQFSSRDCTRPVPRNGGKYCEGRRTRFRSCNTENCP) form the TSP type-1 domain. The spacer stretch occupies residues 682–833 (SKQSGSFKKF…LRKRPWAGRK (152 aa)).

In terms of assembly, interacts with SRPX2. Zn(2+) serves as cofactor. Post-translationally, the precursor is cleaved by a furin endopeptidase. Glycosylated. Can be O-fucosylated by POFUT2 on a serine or a threonine residue found within the consensus sequence C1-X(2)-(S/T)-C2-G of the TSP type-1 repeat domains where C1 and C2 are the first and second cysteine residue of the repeat, respectively. Fucosylated repeats can then be further glycosylated by the addition of a beta-1,3-glucose residue by the glucosyltransferase, B3GALTL. Fucosylation mediates the efficient secretion of ADAMTS family members. Can also be C-glycosylated with one or two mannose molecules on tryptophan residues within the consensus sequence W-X-X-W of the TPRs, and N-glycosylated. These other glycosylations can also facilitate secretion.

The protein resides in the secreted. It is found in the extracellular space. Its subcellular location is the extracellular matrix. The enzyme catalyses Glutamyl endopeptidase. Bonds cleaved include 370-Thr-Glu-Gly-Glu-|-Ala-Arg-Gly-Ser-377 in the interglobular domain of mammalian aggrecan.. Functionally, cleaves aggrecan, a cartilage proteoglycan, at the '392-Glu-|-Ala-393' site and may be involved in its turnover. Also cleaves COMP. May play an important role in the destruction of aggrecan in arthritic diseases. This is A disintegrin and metalloproteinase with thrombospondin motifs 4 (Adamts4) from Mus musculus (Mouse).